Here is an 830-residue protein sequence, read N- to C-terminus: Beta-glucosidase A (830 aa).

D769 is an active-site residue.

Belongs to the glycosyl hydrolase 3 family.

It catalyses the reaction Hydrolysis of terminal, non-reducing beta-D-glucosyl residues with release of beta-D-glucose.. In terms of biological role, b.fibrisolvens beta-glucosidase hydrolyzes cellobiose to a limited extent, cellotriose to cellobiose and glucose, and cellotetraose and cellopentaose to predominantly glucose. The protein is Beta-glucosidase A (bglA) of Butyrivibrio fibrisolvens.